The chain runs to 96 residues: MSNARDVIKRPVITERSTEVMGDKKYTFEVDVRANKTQIKDAIEEIFDVKVAKVNTMNYKGKPKRFGRYTGFTARRKKAIVTLTPDSKELDFFEGV.

Belongs to the universal ribosomal protein uL23 family. In terms of assembly, part of the 50S ribosomal subunit. Contacts protein L29, and trigger factor when it is bound to the ribosome.

One of the early assembly proteins it binds 23S rRNA. One of the proteins that surrounds the polypeptide exit tunnel on the outside of the ribosome. Forms the main docking site for trigger factor binding to the ribosome. In Halalkalibacterium halodurans (strain ATCC BAA-125 / DSM 18197 / FERM 7344 / JCM 9153 / C-125) (Bacillus halodurans), this protein is Large ribosomal subunit protein uL23.